The chain runs to 646 residues: Epithelial sodium channel subunit beta-2 (646 aa).

The Cytoplasmic portion of the chain corresponds to 1–57; it reads MIQGKLKRLKRYFTRALHRIQKGPGYTYKELLVWFCDNTNTHGPKRIIKEGPKKRVM. The chain crosses the membrane as a helical span at residues 58-78; the sequence is WFILTLVFAGLVFWQWGLLIL. The Extracellular segment spans residues 79 to 551; that stretch reads TYLSYGVSVS…GGQFGFWMGG (473 aa). Cystine bridges form between Cys-104/Cys-290, Cys-214/Cys-221, Cys-267/Cys-274, Cys-380/Cys-467, Cys-405/Cys-463, Cys-409/Cys-459, Cys-418/Cys-445, and Cys-420/Cys-434. Residues 552–572 form a helical membrane-spanning segment; the sequence is SVLCIIEFGEIIIDCMWITIL. The Cytoplasmic segment spans residues 573 to 646; it reads KLLAWIRNRR…IEPVSSDEEN (74 aa). Residues 586-646 are disordered; the sequence is QRPQYADPPP…IEPVSSDEEN (61 aa). The span at 610–619 shows a compositional bias: basic and acidic residues; it reads QHDDGNHVTE.

The protein belongs to the amiloride-sensitive sodium channel (TC 1.A.6) family. SCNN1B subfamily. As to quaternary structure, component of the heterotrimeric epithelial sodium channel (ENaC) composed of an alpha/SCNN1A, a beta/SCNN1B and a gamma/SCNN1G subunit.

The protein resides in the apical cell membrane. It is found in the cytoplasmic vesicle membrane. It catalyses the reaction Na(+)(in) = Na(+)(out). Its activity is regulated as follows. Originally identified and characterized by its inhibition by the diuretic drug amiloride. This is one of the three pore-forming subunits of the heterotrimeric epithelial sodium channel (ENaC), a critical regulator of sodium balance and fluid homeostasis. ENaC operates in epithelial tissues, where it mediates the electrodiffusion of sodium ions from extracellular fluid through the apical membrane of cells, with water following osmotically. The polypeptide is Epithelial sodium channel subunit beta-2 (scnn1b-b) (Xenopus laevis (African clawed frog)).